A 190-amino-acid chain; its full sequence is Probable chemoreceptor glutamine deamidase CheD (190 aa).

This sequence belongs to the CheD family.

The catalysed reaction is L-glutaminyl-[protein] + H2O = L-glutamyl-[protein] + NH4(+). Its function is as follows. Probably deamidates glutamine residues to glutamate on methyl-accepting chemotaxis receptors (MCPs), playing an important role in chemotaxis. The protein is Probable chemoreceptor glutamine deamidase CheD of Acidiphilium cryptum (strain JF-5).